The primary structure comprises 129 residues: Large ribosomal subunit protein bL12 (129 aa).

Belongs to the bacterial ribosomal protein bL12 family. Homodimer. Part of the ribosomal stalk of the 50S ribosomal subunit. Forms a multimeric L10(L12)X complex, where L10 forms an elongated spine to which 2 to 4 L12 dimers bind in a sequential fashion. Binds GTP-bound translation factors.

Functionally, forms part of the ribosomal stalk which helps the ribosome interact with GTP-bound translation factors. Is thus essential for accurate translation. This chain is Large ribosomal subunit protein bL12, found in Solidesulfovibrio magneticus (strain ATCC 700980 / DSM 13731 / RS-1) (Desulfovibrio magneticus).